The primary structure comprises 877 residues: (E,E)-geranyllinalool synthase (877 aa).

Asp-540 and Asp-544 together coordinate Mg(2+). Substrate contacts are provided by Asp-540, Asp-544, Arg-677, and Asn-680. The DDXXD motif motif lies at 540–544; that stretch reads DDFFD. Mg(2+) contacts are provided by Asn-680, Ser-684, and Glu-688.

This sequence belongs to the terpene synthase family. Tpsf subfamily. Requires Mg(2+) as cofactor. It depends on Mn(2+) as a cofactor. Expressed in leaves and flowers.

It localises to the cytoplasm. The enzyme catalyses (2E,6E,10E)-geranylgeranyl diphosphate + H2O = (6E,10E)-geranyllinalool + diphosphate. It participates in secondary metabolite biosynthesis; terpenoid biosynthesis. Functionally, involved in the biosynthesis of homoterpenes, attractants of herbivores parasitoids and predators (e.g. predatory mites and parasitoid wasps). Involved in diterpene (C20) biosynthesis. Catalyzes the conversion of geranylgeranyl diphosphate to (E,E)-geranyllinalool, the precursor of the insect-induced volatile C16-homoterpene TMTT. The polypeptide is (E,E)-geranyllinalool synthase (Arabidopsis thaliana (Mouse-ear cress)).